Here is a 354-residue protein sequence, read N- to C-terminus: Protein OPG055 (354 aa).

This sequence belongs to the orthopoxvirus OPG055 family.

Functionally, stimulates increases in peripheral microtubule dynamics and may increase the motility of the infected cells, contributing to cell-to-cell spread of the virus. Seems to inhibit the signaling via the GTPase RHOA and DIAPH1/mDia. The chain is Protein OPG055 (OPG055) from Homo sapiens (Human).